Reading from the N-terminus, the 570-residue chain is MKRFNYGFFHLVLFLISLLLLGSGICMDPFSYDQSLKSECLMEPPQTTANTGGEGVKELKINENGGIRNVVEGVDLREGNIYITSAWVKLRNESQRKVGMTFSEKNGRNVFGGEVMAKRGCWSLLKGGITADFSGPIDIFFESDGLAGLEISVQNVRMQRFHKTQWRLQQDQVIEKIRKNKVRFQMSFKNKSALEGSVISIEQIKPSFLLGCAMNYRILESDSYREWFVSRFRLTSFTNEMKWYATEAVRGQENYKIADSMMQLAEENAILVKGHTVLWDDKYWQPNWVKTITDPEDLKNVTLNRMNSVMKRYKGRLIGWDVMNENVHFNYFENMLGGNASAIVYSLASKLDPDIPLFLNEFNTVEYDKDRVVSPVNVVKKMQEIVSFPGNNNIKGGIGAQGHFAPVQPNLAYMRYALDTLGSLSFPVWLTEVDMFKCPDQVKYMEDILREAYSHPAVKAIILYGGPEVSGFDKLTLADKDFKNTQAGDLIDKLLQEWKQEPVEIPIQHHEHNDEEGGRIIGFSPEISLLHGHYRVTVTNPSMKNLSTRFSVEVTKESGHLQEVQLVIDA.

The signal sequence occupies residues 1 to 24 (MKRFNYGFFHLVLFLISLLLLGSG). N-linked (GlcNAc...) asparagine glycans are attached at residues Asn-92, Asn-190, and Asn-300. One can recognise a GH10 domain in the interval 195 to 494 (EGSVISIEQI…TQAGDLIDKL (300 aa)). The Proton donor role is filled by Glu-325. Asn-339 carries an N-linked (GlcNAc...) asparagine glycan. Glu-432 functions as the Nucleophile in the catalytic mechanism. A glycan (N-linked (GlcNAc...) asparagine) is linked at Asn-545.

It belongs to the glycosyl hydrolase 10 (cellulase F) family.

It carries out the reaction Endohydrolysis of (1-&gt;4)-beta-D-xylosidic linkages in xylans.. Its pathway is glycan degradation; xylan degradation. Binds to and hydrolyzes insoluble and soluble xylan substrates. The chain is Endo-1,4-beta-xylanase 4 from Arabidopsis thaliana (Mouse-ear cress).